Consider the following 528-residue polypeptide: ATP synthase subunit alpha (528 aa).

ATP is bound at residue 169–176 (GDRQTGKT).

The protein belongs to the ATPase alpha/beta chains family. In terms of assembly, F-type ATPases have 2 components, CF(1) - the catalytic core - and CF(0) - the membrane proton channel. CF(1) has five subunits: alpha(3), beta(3), gamma(1), delta(1), epsilon(1). CF(0) has three main subunits: a(1), b(2) and c(9-12). The alpha and beta chains form an alternating ring which encloses part of the gamma chain. CF(1) is attached to CF(0) by a central stalk formed by the gamma and epsilon chains, while a peripheral stalk is formed by the delta and b chains.

The protein localises to the cell membrane. It carries out the reaction ATP + H2O + 4 H(+)(in) = ADP + phosphate + 5 H(+)(out). Produces ATP from ADP in the presence of a proton gradient across the membrane. The alpha chain is a regulatory subunit. The protein is ATP synthase subunit alpha of Mycoplasmopsis agalactiae (strain NCTC 10123 / CIP 59.7 / PG2) (Mycoplasma agalactiae).